Consider the following 1392-residue polypeptide: ATP-dependent helicase/nuclease subunit A (1392 aa).

In terms of domain architecture, UvrD-like helicase ATP-binding spans 3 to 489 (NPKWTPAQQA…IDLNQNFRSR (487 aa)). Residue 24–31 (AAAGSGKT) participates in ATP binding. Disordered stretches follow at residues 291-319 (RGSKKNLPDSLIDEENSKRLREESKKARD), 555-594 (KRGAEDAATEVDSPAKGEGEEFEQNREPESGDDESSLEEA), and 1051-1126 (GPVQ…LDTK). 2 stretches are compositionally biased toward basic and acidic residues: residues 305–319 (ENSKRLREESKKARD) and 567–583 (SPAKGEGEEFEQNREPE). One can recognise a UvrD-like helicase C-terminal domain in the interval 556–886 (RGAEDAATEV…RFITVHSSKG (331 aa)). Residues 584 to 594 (SGDDESSLEEA) show a composition bias toward acidic residues. Positions 1088 to 1113 (ASGKTEIPGETKNSEETKTSEDKKNL) are enriched in basic and acidic residues.

It belongs to the helicase family. AddA subfamily. Heterodimer of AddA and AddB/RexB. Mg(2+) is required as a cofactor.

The catalysed reaction is Couples ATP hydrolysis with the unwinding of duplex DNA by translocating in the 3'-5' direction.. It carries out the reaction ATP + H2O = ADP + phosphate + H(+). Functionally, the heterodimer acts as both an ATP-dependent DNA helicase and an ATP-dependent, dual-direction single-stranded exonuclease. Recognizes the chi site generating a DNA molecule suitable for the initiation of homologous recombination. The AddA nuclease domain is required for chi fragment generation; this subunit has the helicase and 3' -&gt; 5' nuclease activities. This is ATP-dependent helicase/nuclease subunit A from Desulfitobacterium hafniense (strain DSM 10664 / DCB-2).